Consider the following 258-residue polypeptide: Snake venom serine proteinase 8 (258 aa).

The first 18 residues, 1 to 18 (MVLIRVLANLLILQLSYA), serve as a signal peptide directing secretion. A propeptide spanning residues 19–24 (QKSSEL) is cleaved from the precursor. The Peptidase S1 domain maps to 25–249 (VIGGDECNIN…YNDWIQSIIA (225 aa)). Intrachain disulfides connect cysteine 31–cysteine 163, cysteine 50–cysteine 66, cysteine 98–cysteine 256, cysteine 142–cysteine 210, cysteine 174–cysteine 189, and cysteine 200–cysteine 225. Residue asparagine 44 is glycosylated (N-linked (GlcNAc...) asparagine). Residues histidine 65 and aspartate 110 each act as charge relay system in the active site. Serine 204 acts as the Charge relay system in catalysis.

Belongs to the peptidase S1 family. Snake venom subfamily. Monomer. Expressed by the venom gland.

The protein localises to the secreted. In terms of biological role, snake venom serine protease that may act in the hemostasis system of the prey. The protein is Snake venom serine proteinase 8 of Crotalus adamanteus (Eastern diamondback rattlesnake).